Consider the following 174-residue polypeptide: Neuromedin-U (174 aa).

A signal peptide spans 1 to 37 (MSRAAGHRPGLSAGQLAAATASPLLSLLLLLACCADA). Residues 38 to 105 (CKGVPISPQR…EQSEKDNTKR (68 aa)) constitute a propeptide that is removed on maturation. Residue M141 is modified to Methionine sulfoxide; partial. An Asparagine amide modification is found at N166. The propeptide occupies 170 to 174 (STSFI).

Belongs to the NmU family.

The protein localises to the secreted. In terms of biological role, ligand for receptors NMUR1 and NMUR2. Stimulates muscle contractions of specific regions of the gastrointestinal tract. Functionally, does not function as a ligand for either NMUR1 or NMUR2. Indirectly induces prolactin release although its potency is much lower than that of neuromedin precursor-related peptide 36. Its function is as follows. Does not function as a ligand for either NMUR1 or NMUR2. Indirectly induces prolactin release from lactotroph cells in the pituitary gland, probably via the hypothalamic dopaminergic system. Stimulates muscle contractions of specific regions of the gastrointestinal tract. The protein is Neuromedin-U (Nmu) of Mus musculus (Mouse).